A 431-amino-acid chain; its full sequence is Protein translocase subunit SecY (431 aa).

Residues 1–17 are Cytoplasmic-facing; sequence MFKTISNFMRVSDIRNK. A helical membrane pass occupies residues 18–38; sequence IIFTLLMLIVFRIGAFIPVPY. The Extracellular segment spans residues 39–66; sequence VNAEALQAQSQMGVFDLLNTFGGGALYQ. A helical membrane pass occupies residues 67–87; it reads FSIFAMGITPYITASIIIQLL. The Cytoplasmic segment spans residues 88–115; sequence QMDVVPKFTEWSKQGEVGRRKLAQFTRY. The helical transmembrane segment at 116 to 136 threads the bilayer; the sequence is FTIVLGFIQALGMSYGFNNLA. Over 137-145 the chain is Extracellular; that stretch reads NGMLIEKSG. Residues 146–166 form a helical membrane-spanning segment; the sequence is VSTYLIIALVLTGGTAFLMWL. Residues 167–177 are Cytoplasmic-facing; the sequence is GEQITSHGVGN. A helical transmembrane segment spans residues 178–198; it reads GISIIIFAGIVSSIPKTIGQI. Residues 199–213 are Extracellular-facing; the sequence is YETQFVGSNDQLFIH. Residues 214 to 234 traverse the membrane as a helical segment; sequence IVKVALLVIAILAVIVGVIFI. At 235–261 the chain is on the cytoplasmic side; sequence QQAVRKIAIQYAKGTGRSPAGGGQSTH. The chain crosses the membrane as a helical span at residues 262 to 282; it reads LPLKVNPAGVIPVIFAVAFLI. Over 283-308 the chain is Extracellular; it reads TPRTIASFFGTNDVTKWIQNNFDNTH. Residues 309–329 traverse the membrane as a helical segment; sequence PVGMAIYVALIIAFTYFYAFV. Topologically, residues 330 to 368 are cytoplasmic; it reads QVNPEQMADNLKKQGGYIPGVRPGKMTQDRITSILYRLT. Transmembrane regions (helical) follow at residues 369 to 389 and 390 to 410; these read FVGSIFLAVISILPIFFIQFA and GLPQSAQIGGTSLLIVVGVAL. Residues 411–431 lie on the Cytoplasmic side of the membrane; that stretch reads ETMKQLESQLVKRNYRGFMKN.

It belongs to the SecY/SEC61-alpha family. As to quaternary structure, component of the Sec protein translocase complex. Heterotrimer consisting of SecY, SecE and SecG subunits. The heterotrimers can form oligomers, although 1 heterotrimer is thought to be able to translocate proteins. Interacts with the ribosome. Interacts with SecDF, and other proteins may be involved. Interacts with SecA. Interacts with FloT.

It localises to the cell membrane. It is found in the membrane raft. Functionally, the central subunit of the protein translocation channel SecYEG. Consists of two halves formed by TMs 1-5 and 6-10. These two domains form a lateral gate at the front which open onto the bilayer between TMs 2 and 7, and are clamped together by SecE at the back. The channel is closed by both a pore ring composed of hydrophobic SecY resides and a short helix (helix 2A) on the extracellular side of the membrane which forms a plug. The plug probably moves laterally to allow the channel to open. The ring and the pore may move independently. In Bacillus subtilis (strain 168), this protein is Protein translocase subunit SecY.